Reading from the N-terminus, the 365-residue chain is MTQTLTLLGLESSCDDTAAAVVRQTTGAKAEILSSIVFGQTELHSAYGGVVPEIAARAHAEKLDSCVRDALAEAGLTLGDLDAIAVTAGPGLIGGVMSGVMCAKGISAATGLPLIGVNHLAGHALTPRLTDDITYPYLMLLVSGGHCQYLIARGPETFSRLGGTIDDAPGEAFDKTARLLGLPQPGGPSVQAEAEHGDPERFRFPRPLLDRPDCNLSFSGLKTALMRMRDQIIAEKGGLTRQDRADLCAGFQAAIVDTLVEKTRRALRLYLEDKPQHPTLAVAGGVAANTEIRNGLMALCFELETDFLAPPLALCTDNAAMIAYAGLERYKTGARDGMSLSARPRWPLDKTSPALIGSGKKGAKA.

The Fe cation site is built by H119 and H123. Residues 141–145 (LVSGG), D174, G187, and N289 contribute to the substrate site. D317 is a Fe cation binding site. Residues 341-365 (SARPRWPLDKTSPALIGSGKKGAKA) form a disordered region.

The protein belongs to the KAE1 / TsaD family. The cofactor is Fe(2+).

It localises to the cytoplasm. The catalysed reaction is L-threonylcarbamoyladenylate + adenosine(37) in tRNA = N(6)-L-threonylcarbamoyladenosine(37) in tRNA + AMP + H(+). Functionally, required for the formation of a threonylcarbamoyl group on adenosine at position 37 (t(6)A37) in tRNAs that read codons beginning with adenine. Is involved in the transfer of the threonylcarbamoyl moiety of threonylcarbamoyl-AMP (TC-AMP) to the N6 group of A37, together with TsaE and TsaB. TsaD likely plays a direct catalytic role in this reaction. The polypeptide is tRNA N6-adenosine threonylcarbamoyltransferase (Ruegeria sp. (strain TM1040) (Silicibacter sp.)).